Consider the following 123-residue polypeptide: Large ribosomal subunit protein bL12 (123 aa).

Belongs to the bacterial ribosomal protein bL12 family. As to quaternary structure, homodimer. Part of the ribosomal stalk of the 50S ribosomal subunit. Forms a multimeric L10(L12)X complex, where L10 forms an elongated spine to which 2 to 4 L12 dimers bind in a sequential fashion. Binds GTP-bound translation factors.

Functionally, forms part of the ribosomal stalk which helps the ribosome interact with GTP-bound translation factors. Is thus essential for accurate translation. The protein is Large ribosomal subunit protein bL12 of Clostridium acetobutylicum (strain ATCC 824 / DSM 792 / JCM 1419 / IAM 19013 / LMG 5710 / NBRC 13948 / NRRL B-527 / VKM B-1787 / 2291 / W).